Consider the following 475-residue polypeptide: Ribulose bisphosphate carboxylase large chain (475 aa).

Residues 1-2 constitute a propeptide that is removed on maturation; it reads MS. N-acetylproline is present on P3. An N6,N6,N6-trimethyllysine modification is found at K14. Positions 123 and 173 each coordinate substrate. K175 functions as the Proton acceptor in the catalytic mechanism. Position 177 (K177) interacts with substrate. Mg(2+)-binding residues include K201, D203, and E204. N6-carboxylysine is present on K201. Catalysis depends on H294, which acts as the Proton acceptor. Residues R295, H327, and S379 each coordinate substrate.

This sequence belongs to the RuBisCO large chain family. Type I subfamily. In terms of assembly, heterohexadecamer of 8 large chains and 8 small chains. The cofactor is Mg(2+).

It localises to the plastid. The catalysed reaction is 2 (2R)-3-phosphoglycerate + 2 H(+) = D-ribulose 1,5-bisphosphate + CO2 + H2O. The enzyme catalyses D-ribulose 1,5-bisphosphate + O2 = 2-phosphoglycolate + (2R)-3-phosphoglycerate + 2 H(+). Its function is as follows. RuBisCO catalyzes two reactions: the carboxylation of D-ribulose 1,5-bisphosphate, the primary event in carbon dioxide fixation, as well as the oxidative fragmentation of the pentose substrate in the photorespiration process. Both reactions occur simultaneously and in competition at the same active site. This is Ribulose bisphosphate carboxylase large chain from Aneura mirabilis (Parasitic liverwort).